The sequence spans 359 residues: UDP-N-acetylglucosamine--N-acetylmuramyl-(pentapeptide) pyrophosphoryl-undecaprenol N-acetylglucosamine transferase (359 aa).

Residues 12 to 14, asparagine 124, arginine 163, serine 191, isoleucine 245, 264 to 269, and glutamine 290 each bind UDP-N-acetyl-alpha-D-glucosamine; these read TGG and ALTVAE.

Belongs to the glycosyltransferase 28 family. MurG subfamily.

Its subcellular location is the cell inner membrane. The enzyme catalyses di-trans,octa-cis-undecaprenyl diphospho-N-acetyl-alpha-D-muramoyl-L-alanyl-D-glutamyl-meso-2,6-diaminopimeloyl-D-alanyl-D-alanine + UDP-N-acetyl-alpha-D-glucosamine = di-trans,octa-cis-undecaprenyl diphospho-[N-acetyl-alpha-D-glucosaminyl-(1-&gt;4)]-N-acetyl-alpha-D-muramoyl-L-alanyl-D-glutamyl-meso-2,6-diaminopimeloyl-D-alanyl-D-alanine + UDP + H(+). Its pathway is cell wall biogenesis; peptidoglycan biosynthesis. Cell wall formation. Catalyzes the transfer of a GlcNAc subunit on undecaprenyl-pyrophosphoryl-MurNAc-pentapeptide (lipid intermediate I) to form undecaprenyl-pyrophosphoryl-MurNAc-(pentapeptide)GlcNAc (lipid intermediate II). This Nitrosococcus oceani (strain ATCC 19707 / BCRC 17464 / JCM 30415 / NCIMB 11848 / C-107) protein is UDP-N-acetylglucosamine--N-acetylmuramyl-(pentapeptide) pyrophosphoryl-undecaprenol N-acetylglucosamine transferase.